We begin with the raw amino-acid sequence, 506 residues long: CDK5 regulatory subunit-associated protein 3 (506 aa).

Short sequence motifs (shuffled ATG8-binding motif) lie at residues 267 to 270 (IDWG), 292 to 295 (IDWG), and 310 to 313 (IDWG). The tract at residues 269 to 506 (WGDFGVEAVS…RPVNLMGTSL (238 aa)) is required for interaction with UFL1 and mediates interaction with CHEK1. The tract at residues 355–370 (DELMELEIFLAQRAVE) is RPL10a-binding domain (RBD). Lysine 450 participates in a covalent cross-link: Glycyl lysine isopeptide (Lys-Gly) (interchain with G-Cter in SUMO2).

Belongs to the CDK5RAP3 family. As to quaternary structure, substrate adapter component of the UFM1 ribosome E3 ligase (UREL) complex, composed of UFL1, DDRGK1 and CDK5RAP3. Interaction with UFL1 anchors CDK5RAP3 in the cytoplasm, preventing its translocation to the nucleus which allows expression of the CCND1 cyclin and progression of cells through the G1/S transition. Interacts with ATG8 family proteins MAP1LC3A, MAP1LC3B, GABARAP, GABARAPL1 and GABARAPL2. Interacts with CDK5R1; competes with CDK5RAP1 and CDK5RAP2. Interacts with RELA. Interacts with CHEK1; may negatively regulate CHEK1 and thereby stimulate entry into mitosis. Interacts with CDKN2A/ARF and MDM2; forms a ternary complex involved in regulation of p53/TP53. Interacts with MAPK14. Interacts with CCNB1. Interacts with TUBG1; may regulate CDK5RAP3 in mitotic G2/M transition checkpoint. In terms of assembly, (Microbial infection) Interacts with hepatitis B virus large envelope protein mutant pre-s2; promotes mitotic entry. In terms of processing, may be phosphorylated by CDK5. Post-translationally, ubiquitinated. Probably triggers proteasomal degradation and is negatively regulated by UFL1. May be ufmylated. In terms of processing, cleaved by caspases early during apoptosis, the resulting peptides may play a role in rupture of the nuclear envelope. In terms of tissue distribution, ubiquitously expressed. Expressed in heart, brain, placenta, lung, liver, skeletal muscle, kidney and pancreas. Isoform 3 is expressed in kidney, liver, skeletal muscle and placenta.

It localises to the endoplasmic reticulum membrane. Its subcellular location is the cytoplasm. The protein localises to the nucleus. The protein resides in the cytoskeleton. It is found in the microtubule organizing center. It localises to the centrosome. Its function is as follows. Substrate adapter of E3 ligase complexes mediating ufmylation, the covalent attachment of the ubiquitin-like modifier UFM1 to substrate proteins, and which is involved in various processes, such as ribosome recycling and reticulophagy (also called ER-phagy). As part of the UREL complex, plays a key role in ribosome recycling by promoting mono-ufmylation of RPL26/uL24 subunit of the 60S ribosome. Ufmylation of RPL26/uL24 occurs on free 60S ribosomes following ribosome dissociation: it weakens the junction between post-termination 60S subunits and SEC61 translocons, promoting release and recycling of the large ribosomal subunit from the endoplasmic reticulum membrane. Ufmylation of RPL26/uL24 and subsequent 60S ribosome recycling either take place after normal termination of translation or after ribosome stalling during cotranslational translocation at the endoplasmic reticulum. Within the UREL complex, CDK5RAP3 acts as a substrate adapter that constrains UFL1 ligase activity to mono-ufmylate RPL26/uL24 at 'Lys-134'. The UREL complex is also involved in reticulophagy in response to endoplasmic reticulum stress by promoting ufmylation of proteins such as CYB5R3, thereby promoting lysosomal degradation of ufmylated proteins. Also acts as a regulator of transcription: negatively regulates NF-kappa-B-mediated gene transcription through the control of RELA phosphorylation. Also regulates mitotic G2/M transition checkpoint and mitotic G2 DNA damage checkpoint. Through its interaction with CDKN2A/ARF and MDM2 may induce MDM2-dependent p53/TP53 ubiquitination, stabilization and activation in the nucleus, thereby promoting G1 cell cycle arrest and inhibition of cell proliferation. May also play a role in the rupture of the nuclear envelope during apoptosis. May regulate MAPK14 activity by regulating its dephosphorylation by PPM1D/WIP1. Required for liver development. (Microbial infection) May be negatively regulated by hepatitis B virus large envelope protein mutant pre-s2 to promote mitotic entry. The chain is CDK5 regulatory subunit-associated protein 3 from Homo sapiens (Human).